A 598-amino-acid polypeptide reads, in one-letter code: Arylsulfate sulfotransferase AssT (598 aa).

Positions 1–27 are cleaved as a signal peptide; it reads MFDKYRKTLVAGTVAITLGLSASGVMA. 4-methylumbelliferone contacts are provided by H279 and H383. A disulfide bridge links C445 with C451. H463 provides a ligand contact to 4-methylumbelliferone. Residue H463 is the Nucleophile; sulfurylated histidine covalent intermediate of the active site.

Belongs to the aryl sulfotransferase family. As to quaternary structure, homodimer. The disulfide bond is crucial for enzyme activity.

It is found in the periplasm. It catalyses the reaction an aryl sulfate + a phenol = an aryl sulfate + a phenol. The enzyme catalyses 4-methylumbelliferone sulfate + phenol = phenyl sulfate + 4-methylumbelliferone. Functionally, catalyzes the transfer of a sulfate group from a phenyl sulfate ester to other phenolic compounds. In vitro, is able to use 4-methylumbelliferyl sulfate and p-nitrophenyl sulfate (PNS) as donor substrates with phenol as the acceptor substrate. Cannot use 3'-phosphoadenosine-5'-phophosulfate (PAPS), the donor substrate of mammalian sulfotransferase. The polypeptide is Arylsulfate sulfotransferase AssT (Escherichia coli O6:H1 (strain CFT073 / ATCC 700928 / UPEC)).